Reading from the N-terminus, the 399-residue chain is Dual specificity mitogen-activated protein kinase kinase 4 (399 aa).

Positions methionine 1–lysine 40 are disordered. Alanine 2 is modified (N-acetylalanine). Residues serine 7–glycine 22 are compositionally biased toward gly residues. The interval methionine 37 to proline 52 is d domain. Arginine 58 carries the asymmetric dimethylarginine; alternate modification. Omega-N-methylarginine; alternate is present on arginine 58. At serine 90 the chain carries Phosphoserine. Residues leucine 102–isoleucine 367 enclose the Protein kinase domain. Residues isoleucine 108 to valine 116 and lysine 131 each bind ATP. Aspartate 229 acts as the Proton acceptor in catalysis. At serine 257 the chain carries Phosphoserine; by MAP3K. A Phosphothreonine; by MAP3K modification is found at threonine 261. The interval histidine 364–glutamine 387 is DVD domain.

This sequence belongs to the protein kinase superfamily. STE Ser/Thr protein kinase family. MAP kinase kinase subfamily. In terms of assembly, interacts with SPAG9. Interacts (via its D domain) with its substrates MAPK8/JNK1, MAPK9/JNK2, MAPK10/JNK3, MAPK11 and MAPK14. Interacts (via its DVD domain) with MAP3Ks activators like MAP3K1/MEKK1 and MAP3K11/MLK3. Interacts with ARRB1, ARRB2 and MAPK8IP3/JIP3. Post-translationally, activated by phosphorylation on Ser-257 and Thr-261 by MAP kinase kinase kinases (MAP3Ks). In terms of tissue distribution, abundant expression is seen in the skeletal muscle. It is also widely expressed in other tissues.

It is found in the cytoplasm. The protein resides in the nucleus. It carries out the reaction L-seryl-[protein] + ATP = O-phospho-L-seryl-[protein] + ADP + H(+). It catalyses the reaction L-threonyl-[protein] + ATP = O-phospho-L-threonyl-[protein] + ADP + H(+). The enzyme catalyses L-tyrosyl-[protein] + ATP = O-phospho-L-tyrosyl-[protein] + ADP + H(+). With respect to regulation, activated in response to a variety of cellular stresses, including UV and gamma-irradiation, heat shock, hyperosmolarity, T-cell receptor stimulation, peroxide and inflammatory cytokines. Also activated by developmental cues. MAP2K4/MKK4 is activated by the majority of MKKKs, such as MAP3K5/ASK1, MAP3K1/MEKK1, MAP3K7/TAK1, MAP3K10/MLK2, MAP3K11/MLK3, MAP3K12/DLK and MAP3K13/LZK. Its function is as follows. Dual specificity protein kinase which acts as an essential component of the MAP kinase signal transduction pathway. Essential component of the stress-activated protein kinase/c-Jun N-terminal kinase (SAP/JNK) signaling pathway. With MAP2K7/MKK7, is the one of the only known kinase to directly activate the stress-activated protein kinase/c-Jun N-terminal kinases MAPK8/JNK1, MAPK9/JNK2 and MAPK10/JNK3. MAP2K4/MKK4 and MAP2K7/MKK7 both activate the JNKs by phosphorylation, but they differ in their preference for the phosphorylation site in the Thr-Pro-Tyr motif. MAP2K4 shows preference for phosphorylation of the Tyr residue and MAP2K7/MKK7 for the Thr residue. The phosphorylation of the Thr residue by MAP2K7/MKK7 seems to be the prerequisite for JNK activation at least in response to pro-inflammatory cytokines, while other stimuli activate both MAP2K4/MKK4 and MAP2K7/MKK7 which synergistically phosphorylate JNKs. MAP2K4 is required for maintaining peripheral lymphoid homeostasis. The MKK/JNK signaling pathway is also involved in mitochondrial death signaling pathway, including the release cytochrome c, leading to apoptosis. Whereas MAP2K7/MKK7 exclusively activates JNKs, MAP2K4/MKK4 additionally activates the p38 MAPKs MAPK11, MAPK12, MAPK13 and MAPK14. The protein is Dual specificity mitogen-activated protein kinase kinase 4 (MAP2K4) of Homo sapiens (Human).